Reading from the N-terminus, the 346-residue chain is Probable disease resistance protein At5g45440 (346 aa).

In terms of domain architecture, NB-ARC spans 38-116 (KQVEDRVETD…AYAPRIWVSM (79 aa)). 85 to 92 (GEYGVGKT) contacts ATP. Residues 315-346 (FDDGKANQNGSKDGKTDSVDNPNSEESKTKPL) form a disordered region.

Possible disease resistance protein. The protein is Probable disease resistance protein At5g45440 of Arabidopsis thaliana (Mouse-ear cress).